The primary structure comprises 267 residues: Alpha-tubulin N-acetyltransferase (267 aa).

The N-acetyltransferase domain maps to 1-197 (MDFRAGLENV…NNFVVYSEFF (197 aa)). Acetyl-CoA is bound by residues 131–144 (FYIHESHQRKGYGK) and 167–176 (SMKMIQFLHK).

The protein belongs to the acetyltransferase ATAT1 family.

It carries out the reaction L-lysyl-[alpha-tubulin] + acetyl-CoA = N(6)-acetyl-L-lysyl-[alpha-tubulin] + CoA + H(+). Specifically acetylates 'Lys-40' in alpha-tubulin on the lumenal side of microtubules. Promotes microtubule destabilization and accelerates microtubule dynamics; this activity may be independent of acetylation activity. Acetylates alpha-tubulin with a slow enzymatic rate, due to a catalytic site that is not optimized for acetyl transfer. Enters the microtubule through each end and diffuses quickly throughout the lumen of microtubules. Acetylates only long/old microtubules because of its slow acetylation rate since it does not have time to act on dynamically unstable microtubules before the enzyme is released. The protein is Alpha-tubulin N-acetyltransferase of Schistosoma japonicum (Blood fluke).